A 504-amino-acid polypeptide reads, in one-letter code: DNA-binding protein reb1 (504 aa).

The interval 30-51 (DFDDFPLNKGLKTNNNDYSGSI) is disordered. HTH myb-type domains lie at 308-361 (NPFE…RFGD) and 362-422 (KLKR…KAAS). 2 DNA-binding regions (H-T-H motif) span residues 335–357 (WTKIGRKMARMPNDCRDRWRDVV) and 395–418 (WTLVAQMLGTRTRLQCRYKFQQLT).

It localises to the nucleus. In terms of biological role, DNA-binding protein that recognizes sites within both the enhancer and the promoter of rRNA transcription, as well as upstream of many genes transcribed by RNA polymerase II. Has a role in the termination of RNA polymerase I catalyzed transcription. This is DNA-binding protein reb1 (reb1) from Schizosaccharomyces pombe (strain 972 / ATCC 24843) (Fission yeast).